Here is a 166-residue protein sequence, read N- to C-terminus: Stress response protein NhaX (166 aa).

The protein belongs to the universal stress protein A family.

The sequence is that of Stress response protein NhaX (nhaX) from Bacillus subtilis (strain 168).